The chain runs to 176 residues: NAD(P)H-quinone oxidoreductase subunit 6, chloroplastic (176 aa).

5 helical membrane-spanning segments follow: residues 10 to 30, 32 to 52, 63 to 83, 92 to 112, and 152 to 172; these read FLLV…VLLT, PIFS…FYIL, LLIY…FMNS, LWTV…VSLV, and FFLP…GTIV.

Belongs to the complex I subunit 6 family. In terms of assembly, NDH is composed of at least 16 different subunits, 5 of which are encoded in the nucleus.

Its subcellular location is the plastid. The protein resides in the chloroplast thylakoid membrane. It carries out the reaction a plastoquinone + NADH + (n+1) H(+)(in) = a plastoquinol + NAD(+) + n H(+)(out). The enzyme catalyses a plastoquinone + NADPH + (n+1) H(+)(in) = a plastoquinol + NADP(+) + n H(+)(out). Its function is as follows. NDH shuttles electrons from NAD(P)H:plastoquinone, via FMN and iron-sulfur (Fe-S) centers, to quinones in the photosynthetic chain and possibly in a chloroplast respiratory chain. The immediate electron acceptor for the enzyme in this species is believed to be plastoquinone. Couples the redox reaction to proton translocation, and thus conserves the redox energy in a proton gradient. The sequence is that of NAD(P)H-quinone oxidoreductase subunit 6, chloroplastic (ndhG) from Cicer arietinum (Chickpea).